A 316-amino-acid chain; its full sequence is ATP synthase gamma chain (316 aa).

This sequence belongs to the ATPase gamma chain family. In terms of assembly, F-type ATPases have 2 components, CF(1) - the catalytic core - and CF(0) - the membrane proton channel. CF(1) has five subunits: alpha(3), beta(3), gamma(1), delta(1), epsilon(1). CF(0) has three main subunits: a, b and c.

Its subcellular location is the cellular thylakoid membrane. In terms of biological role, produces ATP from ADP in the presence of a proton gradient across the membrane. The gamma chain is believed to be important in regulating ATPase activity and the flow of protons through the CF(0) complex. The protein is ATP synthase gamma chain of Synechococcus sp. (strain ATCC 27144 / PCC 6301 / SAUG 1402/1) (Anacystis nidulans).